The chain runs to 622 residues: Dehydrogenase mpl7 (622 aa).

FAD contacts are provided by residues 23-24 (TA), 44-45 (EA), and 102-105 (NFMS). The active-site Proton acceptor is the H554. FAD contacts are provided by residues A582 and 593 to 594 (IM).

The protein belongs to the GMC oxidoreductase family. As to quaternary structure, homodimer. FAD is required as a cofactor.

It participates in mycotoxin biosynthesis. Functionally, dehydrogenase; part of the gene cluster that mediates the biosynthesis of the mycotoxin citrinin, a hepato-nephrotoxic compound to humans due to inhibition of respiration complex III. The pathway begins with the synthesis of a keto-aldehyde intermediate by the citrinin PKS (pksCT) from successive condensations of 4 malonyl-CoA units, presumably with a simple acetyl-CoA starter unit. Release of the keto-aldehyde intermediate is consistent with the presence of the C-terminal reductive release domain. Mp11 collaborates with pksCT by catalyzing the hydrolysis of ACP-bound acyl intermediates to free the ACP from stalled intermediates. Mpl2 then catalyzes the oxidation of the C-12 methyl of the ketone intermediate to an alcohol intermediate which is further oxidized by the oxidoreductase mpl7 to produce a bisaldehyde intermediate. The fourth catalytic step is catalyzed by the mpl4 aldehyde dehydrogenase. The final transformation is the reduction of C-3 by mpl6 to provide the chemically stable citrinin nucleus. This Monascus purpureus (Red mold) protein is Dehydrogenase mpl7.